The primary structure comprises 118 residues: uncharacterized protein (118 aa).

4 consecutive transmembrane segments (helical) span residues 12 to 32, 39 to 59, 63 to 83, and 98 to 118; these read IISL…FATF, LMPH…SLFI, IIGY…CPTI, and SAHL…VILF.

Its subcellular location is the cell membrane. This is an uncharacterized protein from Methanocaldococcus jannaschii (strain ATCC 43067 / DSM 2661 / JAL-1 / JCM 10045 / NBRC 100440) (Methanococcus jannaschii).